Consider the following 107-residue polypeptide: U1-lycotoxin-Ls1h (107 aa).

A signal peptide spans 1-20 (MMKVLVVVALLVTLISYSSS). Positions 21 to 41 (EGIDDLEADELLSLMANEQTR) are excised as a propeptide. 3 cysteine pairs are disulfide-bonded: Cys44-Cys59, Cys51-Cys68, and Cys70-Cys84.

It belongs to the neurotoxin 19 (CSTX) family. 04 (U1-Lctx) subfamily. As to expression, expressed by the venom gland.

The protein localises to the secreted. The protein is U1-lycotoxin-Ls1h of Lycosa singoriensis (Wolf spider).